The following is a 594-amino-acid chain: Probable acyl-CoA dehydrogenase (594 aa).

The active-site Proton acceptor is E405.

It belongs to the acyl-CoA dehydrogenase family. FAD serves as cofactor.

It carries out the reaction a 2,3-saturated acyl-CoA + A = a 2,3-dehydroacyl-CoA + AH2. Its pathway is lipid metabolism; fatty acid beta-oxidation. In terms of biological role, involved in the degradation of long-chain fatty acids. The protein is Probable acyl-CoA dehydrogenase (fadE) of Bacillus subtilis (strain 168).